The primary structure comprises 78 residues: Putative gastrointestinal growth factor xP1 (78 aa).

A signal peptide spans 1-23 (MNYKVFCLVAIALIVGSIGSANG). The region spanning 30–73 (EQCSVERLARVNCGYSGITPQECTKQGCCFDSTIQDAPWCFYPR) is the P-type domain. 3 cysteine pairs are disulfide-bonded: C32/C58, C42/C57, and C52/C69.

Stomach mucosa.

The protein localises to the secreted. Functionally, may act as a growth factor. This is Putative gastrointestinal growth factor xP1 (p1) from Xenopus laevis (African clawed frog).